The following is a 595-amino-acid chain: NADH-quinone oxidoreductase subunit C/D (595 aa).

The interval Met-1–Gln-186 is NADH dehydrogenase I subunit C. Positions Asp-210–Arg-595 are NADH dehydrogenase I subunit D.

This sequence in the N-terminal section; belongs to the complex I 30 kDa subunit family. In the C-terminal section; belongs to the complex I 49 kDa subunit family. In terms of assembly, NDH-1 is composed of 13 different subunits. Subunits NuoB, CD, E, F, and G constitute the peripheral sector of the complex.

It is found in the cell inner membrane. The enzyme catalyses a quinone + NADH + 5 H(+)(in) = a quinol + NAD(+) + 4 H(+)(out). In terms of biological role, NDH-1 shuttles electrons from NADH, via FMN and iron-sulfur (Fe-S) centers, to quinones in the respiratory chain. The immediate electron acceptor for the enzyme in this species is believed to be ubiquinone. Couples the redox reaction to proton translocation (for every two electrons transferred, four hydrogen ions are translocated across the cytoplasmic membrane), and thus conserves the redox energy in a proton gradient. The protein is NADH-quinone oxidoreductase subunit C/D of Psychrobacter sp. (strain PRwf-1).